The following is a 405-amino-acid chain: Tyrosine--tRNA ligase (405 aa).

Tyr35 lines the L-tyrosine pocket. The 'HIGH' region signature appears at 40–49; it reads ATSSSLHIGH. The L-tyrosine site is built by Tyr166 and Gln170. A 'KMSKS' region motif is present at residues 226-230; the sequence is KMGKS. ATP is bound at residue Lys229. Residues 340–404 form the S4 RNA-binding domain; it reads VLLINLMLDS…VGKKKFLRIV (65 aa).

This sequence belongs to the class-I aminoacyl-tRNA synthetase family. TyrS type 1 subfamily. In terms of assembly, homodimer.

The protein resides in the cytoplasm. It catalyses the reaction tRNA(Tyr) + L-tyrosine + ATP = L-tyrosyl-tRNA(Tyr) + AMP + diphosphate + H(+). Catalyzes the attachment of tyrosine to tRNA(Tyr) in a two-step reaction: tyrosine is first activated by ATP to form Tyr-AMP and then transferred to the acceptor end of tRNA(Tyr). This Borreliella afzelii (strain PKo) (Borrelia afzelii) protein is Tyrosine--tRNA ligase.